A 130-amino-acid chain; its full sequence is Small ribosomal subunit protein uS9 (130 aa).

A disordered region spans residues 99-130 (KSAGMLTRDPRMKERKKPGLKKARKASQFSKR). Positions 111–130 (KERKKPGLKKARKASQFSKR) are enriched in basic residues.

It belongs to the universal ribosomal protein uS9 family.

This Latilactobacillus sakei subsp. sakei (strain 23K) (Lactobacillus sakei subsp. sakei) protein is Small ribosomal subunit protein uS9.